Here is a 194-residue protein sequence, read N- to C-terminus: dCTP deaminase (194 aa).

Residues 110-115 (RSSLAR), Asp-128, 136-138 (VLE), Tyr-171, Lys-178, and Gln-182 each bind dCTP. Glu-138 functions as the Proton donor/acceptor in the catalytic mechanism.

It belongs to the dCTP deaminase family. As to quaternary structure, homotrimer.

It carries out the reaction dCTP + H2O + H(+) = dUTP + NH4(+). Its pathway is pyrimidine metabolism; dUMP biosynthesis; dUMP from dCTP (dUTP route): step 1/2. Its function is as follows. Catalyzes the deamination of dCTP to dUTP. This chain is dCTP deaminase, found in Haemophilus ducreyi (strain 35000HP / ATCC 700724).